The following is a 455-amino-acid chain: Chromosomal replication initiator protein DnaA (455 aa).

The interval M1 to A74 is domain I, interacts with DnaA modulators. The tract at residues A74–E116 is domain II. The span at S85–N95 shows a compositional bias: basic and acidic residues. The segment at S85 to Y104 is disordered. Residues Q117–S333 are domain III, AAA+ region. ATP-binding residues include G161, G163, K164, and T165. A domain IV, binds dsDNA region spans residues K334–Q455.

It belongs to the DnaA family. In terms of assembly, oligomerizes as a right-handed, spiral filament on DNA at oriC.

The protein resides in the cytoplasm. Its function is as follows. Plays an essential role in the initiation and regulation of chromosomal replication. ATP-DnaA binds to the origin of replication (oriC) to initiate formation of the DNA replication initiation complex once per cell cycle. Binds the DnaA box (a 9 base pair repeat at the origin) and separates the double-stranded (ds)DNA. Forms a right-handed helical filament on oriC DNA; dsDNA binds to the exterior of the filament while single-stranded (ss)DNA is stabiized in the filament's interior. The ATP-DnaA-oriC complex binds and stabilizes one strand of the AT-rich DNA unwinding element (DUE), permitting loading of DNA polymerase. After initiation quickly degrades to an ADP-DnaA complex that is not apt for DNA replication. Binds acidic phospholipids. The protein is Chromosomal replication initiator protein DnaA of Staphylococcus saprophyticus subsp. saprophyticus (strain ATCC 15305 / DSM 20229 / NCIMB 8711 / NCTC 7292 / S-41).